We begin with the raw amino-acid sequence, 376 residues long: 3-dehydroquinate synthase (376 aa).

Residues 115–119 (GVIGD), 139–140 (TS), lysine 152, and lysine 161 contribute to the NAD(+) site. 3 residues coordinate Zn(2+): glutamate 194, histidine 256, and histidine 275.

This sequence belongs to the sugar phosphate cyclases superfamily. Dehydroquinate synthase family. Co(2+) serves as cofactor. The cofactor is Zn(2+). Requires NAD(+) as cofactor.

The protein localises to the cytoplasm. It catalyses the reaction 7-phospho-2-dehydro-3-deoxy-D-arabino-heptonate = 3-dehydroquinate + phosphate. It participates in metabolic intermediate biosynthesis; chorismate biosynthesis; chorismate from D-erythrose 4-phosphate and phosphoenolpyruvate: step 2/7. Functionally, catalyzes the conversion of 3-deoxy-D-arabino-heptulosonate 7-phosphate (DAHP) to dehydroquinate (DHQ). This Rhizobium leguminosarum bv. trifolii (strain WSM2304) protein is 3-dehydroquinate synthase.